The chain runs to 335 residues: Nucleoid-associated protein SeAg_B2375 (335 aa).

The protein belongs to the YejK family.

It is found in the cytoplasm. Its subcellular location is the nucleoid. This Salmonella agona (strain SL483) protein is Nucleoid-associated protein SeAg_B2375.